The chain runs to 117 residues: Ribonuclease P protein component (117 aa).

This sequence belongs to the RnpA family. As to quaternary structure, consists of a catalytic RNA component (M1 or rnpB) and a protein subunit.

The enzyme catalyses Endonucleolytic cleavage of RNA, removing 5'-extranucleotides from tRNA precursor.. Its function is as follows. RNaseP catalyzes the removal of the 5'-leader sequence from pre-tRNA to produce the mature 5'-terminus. It can also cleave other RNA substrates such as 4.5S RNA. The protein component plays an auxiliary but essential role in vivo by binding to the 5'-leader sequence and broadening the substrate specificity of the ribozyme. The polypeptide is Ribonuclease P protein component (Aliivibrio fischeri (strain ATCC 700601 / ES114) (Vibrio fischeri)).